The sequence spans 269 residues: Fructose permease IIC component (269 aa).

The PTS EIIC type-4 domain maps to 1–234 (MSSLQIILLL…GALGLCLALL (234 aa)). A run of 7 helical transmembrane segments spans residues 2 to 22 (SSLQ…ASVL), 35 to 54 (TLVG…GGTL), 64 to 86 (VGLA…VITA), 90 to 110 (IGEG…LTIF), 149 to 169 (VMIP…AFLG), 181 to 201 (IGGG…MNIP), and 206 to 226 (FFYI…GFGA).

Its subcellular location is the cell membrane. Its function is as follows. The phosphoenolpyruvate-dependent sugar phosphotransferase system (PTS), a major carbohydrate active -transport system, catalyzes the phosphorylation of incoming sugar substrates concomitant with their translocation across the cell membrane. This system is involved in fructose transport. This Bacillus subtilis (strain 168) protein is Fructose permease IIC component (levF).